The chain runs to 158 residues: Snaclec mucetin subunit alpha (158 aa).

Residues 1–23 form the signal peptide; the sequence is MGRFTFVSFGLLVVFLSLSGTGA. Disulfide bonds link cysteine 27–cysteine 38, cysteine 55–cysteine 152, and cysteine 127–cysteine 144. A C-type lectin domain is found at 34 to 153; sequence YDRYCYQAFS…CGRENPFVCK (120 aa).

This sequence belongs to the snaclec family. As to quaternary structure, dimer and tetramer of heterodimers of alpha and beta subunits ((alphabeta)(2) and (alphabeta)(4)); disulfide-linked. These two multimeric forms are found. In terms of processing, the complex is glycosylated. In terms of tissue distribution, expressed by the venom gland.

The protein resides in the secreted. In terms of biological role, potent platelet activator that acts via GPIb (GP1BA/GP1BB). After activation by the toxin, the receptor is redistributed on platelet surface thanks to cytoskeletal translocation. The indirect activation of integrin alpha-IIb/beta-3 (ITGA2B/ITGB3) also induced by the toxin is downstream the cytoskeletal translocation of GPIb. This chain is Snaclec mucetin subunit alpha, found in Protobothrops mucrosquamatus (Taiwan habu).